Here is a 98-residue protein sequence, read N- to C-terminus: MANNNSAKKRIEIAERNRLRNRTYKSSMRTLMKRCFSACDAYGSAPGEEAKASVQASLREAFSKIDKAVKVGVLHRNNGANQKSRLSSAVRKVLEPTS.

This sequence belongs to the bacterial ribosomal protein bS20 family.

Binds directly to 16S ribosomal RNA. The polypeptide is Small ribosomal subunit protein bS20 (Synechococcus sp. (strain CC9902)).